The following is a 435-amino-acid chain: Kynurenine--oxoglutarate transaminase (435 aa).

Substrate is bound by residues Gly-46 and Asn-198. N6-(pyridoxal phosphate)lysine is present on Lys-262. Residue Arg-413 participates in substrate binding.

The protein belongs to the class-I pyridoxal-phosphate-dependent aminotransferase family. Homodimer. The cofactor is pyridoxal 5'-phosphate.

The protein resides in the cytoplasm. It carries out the reaction L-kynurenine + 2-oxoglutarate = kynurenate + L-glutamate + H2O. The catalysed reaction is 3-phenylpyruvate + L-glutamine = 2-oxoglutaramate + L-phenylalanine. The enzyme catalyses an S-substituted L-cysteine + H2O = a thiol + pyruvate + NH4(+). The protein operates within amino-acid degradation; L-kynurenine degradation; kynurenate from L-kynurenine: step 1/2. Its function is as follows. Catalyzes the irreversible transamination of the L-tryptophan metabolite L-kynurenine to form kynurenic acid (KA). Metabolizes the cysteine conjugates of certain halogenated alkenes and alkanes to form reactive metabolites. Catalyzes the beta-elimination of S-conjugates and Se-conjugates of L-(seleno)cysteine, resulting in the cleavage of the C-S or C-Se bond. The sequence is that of Kynurenine--oxoglutarate transaminase (ccbl) from Dictyostelium discoideum (Social amoeba).